The following is a 703-amino-acid chain: Ubiquitin-like modifier-activating enzyme ATG7 (703 aa).

Position 2 is an N-acetylalanine (Ala-2). Positions 15-17 match the FAP motif motif; that stretch reads FAP. Residue Lys-45 forms a Glycyl lysine isopeptide (Lys-Gly) (interchain with G-Cter in ubiquitin) linkage. Cys-572 functions as the Glycyl thioester intermediate in the catalytic mechanism. Residue Ser-698 is modified to Phosphoserine.

It belongs to the ATG7 family. In terms of assembly, homodimer. Interacts with ATG3; this interaction is essential for the transfer of ATG8-like proteins's thioester from ATG7 to ATG3 and plays a role in the conjugation of ATG12 to ATG5. Interacts with ATG12. Forms intermediate conjugates with GABARAPL1. Forms intermediate conjugates with ATG8-like proteins such as GABARAP, GABARAPL2 or MAP1LC3A. Interacts with EP300 acetyltransferase. Interacts with FOXO1. In terms of processing, acetylated by EP300. Polyubiquitinated on Lys-45 via 'Lys-63'-linked ubiquitin by TRIM32; this modification positiely regulates ATG8 and ATG12 activating enzyme activity leading to initiation of autophagy under metabolic stress. Widely expressed, especially in kidney, liver, lymph nodes and bone marrow.

It is found in the cytoplasm. The protein localises to the preautophagosomal structure. Its function is as follows. E1-like activating enzyme involved in the 2 ubiquitin-like systems required for cytoplasm to vacuole transport (Cvt) and autophagy. Activates ATG12 for its conjugation with ATG5 as well as the ATG8 family proteins for their conjugation with phosphatidylethanolamine. Both systems are needed for the ATG8 association to Cvt vesicles and autophagosomes membranes. Required for autophagic death induced by caspase-8 inhibition. Facilitates LC3-I lipidation with phosphatidylethanolamine to form LC3-II which is found on autophagosomal membranes. Required for mitophagy which contributes to regulate mitochondrial quantity and quality by eliminating the mitochondria to a basal level to fulfill cellular energy requirements and preventing excess ROS production. Modulates p53/TP53 activity to regulate cell cycle and survival during metabolic stress. Also plays a key role in the maintenance of axonal homeostasis, the prevention of axonal degeneration, the maintenance of hematopoietic stem cells, the formation of Paneth cell granules, as well as in adipose differentiation. Plays a role in regulating the liver clock and glucose metabolism by mediating the autophagic degradation of CRY1 (clock repressor) in a time-dependent manner. The chain is Ubiquitin-like modifier-activating enzyme ATG7 from Homo sapiens (Human).